A 152-amino-acid chain; its full sequence is Deoxyuridine 5'-triphosphate nucleotidohydrolase (152 aa).

Substrate contacts are provided by residues 72-74 (RSG), Asn-85, and 89-91 (TID).

This sequence belongs to the dUTPase family. The cofactor is Mg(2+).

The enzyme catalyses dUTP + H2O = dUMP + diphosphate + H(+). The protein operates within pyrimidine metabolism; dUMP biosynthesis; dUMP from dCTP (dUTP route): step 2/2. Its function is as follows. This enzyme is involved in nucleotide metabolism: it produces dUMP, the immediate precursor of thymidine nucleotides and it decreases the intracellular concentration of dUTP so that uracil cannot be incorporated into DNA. This chain is Deoxyuridine 5'-triphosphate nucleotidohydrolase, found in Rhodopseudomonas palustris (strain HaA2).